Consider the following 241-residue polypeptide: Carboxy-S-adenosyl-L-methionine synthase (241 aa).

Residues Y38, 63–65, 88–89, 116–117, N131, and R198 each bind S-adenosyl-L-methionine; these read GCS, DN, and DI.

The protein belongs to the class I-like SAM-binding methyltransferase superfamily. Cx-SAM synthase family. Homodimer.

It carries out the reaction prephenate + S-adenosyl-L-methionine = carboxy-S-adenosyl-L-methionine + 3-phenylpyruvate + H2O. In terms of biological role, catalyzes the conversion of S-adenosyl-L-methionine (SAM) to carboxy-S-adenosyl-L-methionine (Cx-SAM). The protein is Carboxy-S-adenosyl-L-methionine synthase of Histophilus somni (strain 2336) (Haemophilus somnus).